The following is a 335-amino-acid chain: Holliday junction branch migration complex subunit RuvB (335 aa).

Residues 4-184 are large ATPase domain (RuvB-L); that stretch reads ADRLIDATEK…FGIVQRLEFY (181 aa). ATP is bound by residues isoleucine 23, arginine 24, glycine 65, lysine 68, threonine 69, threonine 70, 131–133, arginine 174, tyrosine 184, and arginine 221; that span reads EDY. Residue threonine 69 coordinates Mg(2+). A small ATPAse domain (RuvB-S) region spans residues 185–255; the sequence is SVEDLSYIVG…VAELALNMID (71 aa). The head domain (RuvB-H) stretch occupies residues 258 to 335; sequence KSGFDYMDRK…HHFGLLPKQD (78 aa). The DNA site is built by arginine 313 and arginine 318.

Belongs to the RuvB family. In terms of assembly, homohexamer. Forms an RuvA(8)-RuvB(12)-Holliday junction (HJ) complex. HJ DNA is sandwiched between 2 RuvA tetramers; dsDNA enters through RuvA and exits via RuvB. An RuvB hexamer assembles on each DNA strand where it exits the tetramer. Each RuvB hexamer is contacted by two RuvA subunits (via domain III) on 2 adjacent RuvB subunits; this complex drives branch migration. In the full resolvosome a probable DNA-RuvA(4)-RuvB(12)-RuvC(2) complex forms which resolves the HJ.

Its subcellular location is the cytoplasm. It carries out the reaction ATP + H2O = ADP + phosphate + H(+). Its function is as follows. The RuvA-RuvB-RuvC complex processes Holliday junction (HJ) DNA during genetic recombination and DNA repair, while the RuvA-RuvB complex plays an important role in the rescue of blocked DNA replication forks via replication fork reversal (RFR). RuvA specifically binds to HJ cruciform DNA, conferring on it an open structure. The RuvB hexamer acts as an ATP-dependent pump, pulling dsDNA into and through the RuvAB complex. RuvB forms 2 homohexamers on either side of HJ DNA bound by 1 or 2 RuvA tetramers; 4 subunits per hexamer contact DNA at a time. Coordinated motions by a converter formed by DNA-disengaged RuvB subunits stimulates ATP hydrolysis and nucleotide exchange. Immobilization of the converter enables RuvB to convert the ATP-contained energy into a lever motion, pulling 2 nucleotides of DNA out of the RuvA tetramer per ATP hydrolyzed, thus driving DNA branch migration. The RuvB motors rotate together with the DNA substrate, which together with the progressing nucleotide cycle form the mechanistic basis for DNA recombination by continuous HJ branch migration. Branch migration allows RuvC to scan DNA until it finds its consensus sequence, where it cleaves and resolves cruciform DNA. The chain is Holliday junction branch migration complex subunit RuvB from Pseudoalteromonas translucida (strain TAC 125).